Reading from the N-terminus, the 880-residue chain is MTIEHSNVGERYNPRAREQKWQAIWDEKKIFQITEENCREKYYVLEMFPYPSGRIHMGHVRNYTMGDVVARYKRAKGFDVLHPMGWDAFGMPAENAALQSKVHPKTWTYQNIAVMRGQLKQLGLSLDWSREFATCDVAYYHRQQMLFLDLYQKGLVARKVAKVNWDPVDQTVLANEQVVDGCGWRSGALVEQRELAQWFFKISDFSEDLLAGLEELEQWPEKVRTMQKNWIGKSQGLLIRWALKSTNGADEVCEAFNEVVCYSTRPDTLFGASFLALSVDHPISQALAQKDKALSAFIENCRCGGMTTAALETAEKQGFCTSLLAVHPFNPRIHLPVYIANFVLMDYGTGAVFGCPAHDQRDWDFAHKYDLPVQPVVLPKGSDAEDFVIAETPYTGDGVMINSDFLDGLTPQEAFEAAAERLEGQMLNGQPQGKRTVQFRLRDWGISRQRYWGCPIPIIHCAACGVVPVPRADLPVELPDDVTFDQPGNPLERHEKWQKVACPVCGQSAKRETDTMDTFVDSSWYYARFTAPWAQEPVDKNAIAEWLPVQQYIGGIEHAILHLLYARFFMRAMKLIGYVTVDEPFKGLFTQGMVVHETYRDDQGWVSPAEISIIEKDGKRQAHKLTDQSEVTIGLIEKMSKSKKNVVDPDDIIASYGADTVRWFVLSDSPPERDVIWTESGVEGAYRFVQRVWRCVVLSAPVLKEVIPCTGHQGAALELSKAAHRMLCTVEDDLEKFAFNRAIARLYEFLNIMAPLLNKIASVEDEMKASLRQAMDFFLALIAPIMPHLAEECHAALGGKTLICELPWPVYDPALIVEDCCTLPVQINGKKRGEVTVAATASEAMIEEAVLALDFVQAHLVEKSIKKMIIVPQRIVNVVL.

Positions 49 to 59 match the 'HIGH' region motif; that stretch reads PYPSGRIHMGH. The 'KMSKS' region motif lies at 638–642; sequence KMSKS. K641 lines the ATP pocket.

This sequence belongs to the class-I aminoacyl-tRNA synthetase family.

The protein resides in the cytoplasm. The enzyme catalyses tRNA(Leu) + L-leucine + ATP = L-leucyl-tRNA(Leu) + AMP + diphosphate. In Bartonella quintana (strain Toulouse) (Rochalimaea quintana), this protein is Leucine--tRNA ligase.